A 138-amino-acid chain; its full sequence is Small ribosomal subunit protein bS6 (138 aa).

Positions 100–138 (SPLAKGREEDDSDSSARRARDDSDDDGDDDEDDRRASAD) are disordered. Residues 121–131 (DSDDDGDDDED) are compositionally biased toward acidic residues.

Belongs to the bacterial ribosomal protein bS6 family.

Binds together with bS18 to 16S ribosomal RNA. This Thioalkalivibrio sulfidiphilus (strain HL-EbGR7) protein is Small ribosomal subunit protein bS6.